Reading from the N-terminus, the 175-residue chain is Probable coatomer subunit zeta-A (175 aa).

Belongs to the adaptor complexes small subunit family. Oligomeric complex that consists of at least the alpha, beta, beta', gamma, delta, epsilon and zeta subunits.

Its subcellular location is the cytoplasm. It localises to the golgi apparatus membrane. It is found in the cytoplasmic vesicle. The protein resides in the COPI-coated vesicle membrane. Functionally, the coatomer is a cytosolic protein complex that binds to dilysine motifs and reversibly associates with Golgi non-clathrin-coated vesicles, which further mediate biosynthetic protein transport from the ER, via the Golgi up to the trans Golgi network. Coatomer complex is required for budding from Golgi membranes, and is essential for the retrograde Golgi-to-ER transport of dilysine-tagged proteins. The zeta subunit may be involved in regulating the coat assembly and, hence, the rate of biosynthetic protein transport due to its association-dissociation properties with the coatomer complex. The polypeptide is Probable coatomer subunit zeta-A (copZa) (Dictyostelium discoideum (Social amoeba)).